A 120-amino-acid polypeptide reads, in one-letter code: NAD(P)H-quinone oxidoreductase subunit 3, chloroplastic (120 aa).

3 consecutive transmembrane segments (helical) span residues 2-22 (FLLY…VIPI), 64-84 (MFAL…PWAL), and 88-108 (ILGV…VLGL).

The protein belongs to the complex I subunit 3 family. As to quaternary structure, NDH is composed of at least 16 different subunits, 5 of which are encoded in the nucleus.

It localises to the plastid. The protein resides in the chloroplast thylakoid membrane. It catalyses the reaction a plastoquinone + NADH + (n+1) H(+)(in) = a plastoquinol + NAD(+) + n H(+)(out). The catalysed reaction is a plastoquinone + NADPH + (n+1) H(+)(in) = a plastoquinol + NADP(+) + n H(+)(out). NDH shuttles electrons from NAD(P)H:plastoquinone, via FMN and iron-sulfur (Fe-S) centers, to quinones in the photosynthetic chain and possibly in a chloroplast respiratory chain. The immediate electron acceptor for the enzyme in this species is believed to be plastoquinone. Couples the redox reaction to proton translocation, and thus conserves the redox energy in a proton gradient. The chain is NAD(P)H-quinone oxidoreductase subunit 3, chloroplastic from Oenothera biennis (German evening primrose).